An 871-amino-acid polypeptide reads, in one-letter code: Coatomer subunit gamma-2 (871 aa).

Residues Met1 to Glu11 are compositionally biased toward basic and acidic residues. Residues Met1–His21 are disordered. HEAT repeat units lie at residues Thr64–Asp101, Arg283–Ser320, Ala321–Ser355, Ser356–Arg392, Ser395–Glu430, and Pro467–Ser504. At Thr594 the chain carries Phosphothreonine.

The protein belongs to the COPG family. As to quaternary structure, oligomeric complex. Binds to CDC42. Interacts with JAGN1. Interacts with TMED10 (via cytoplasmic domain).

It localises to the cytoplasm. Its subcellular location is the cytosol. The protein resides in the golgi apparatus membrane. It is found in the cytoplasmic vesicle. The protein localises to the COPI-coated vesicle membrane. In terms of biological role, the coatomer is a cytosolic protein complex that binds to dilysine motifs and reversibly associates with Golgi non-clathrin-coated vesicles, which further mediate biosynthetic protein transport from the ER, via the Golgi up to the trans Golgi network. Coatomer complex is required for budding from Golgi membranes, and is essential for the retrograde Golgi-to-ER transport of dilysine-tagged proteins. In mammals, the coatomer can only be recruited by membranes associated to ADP-ribosylation factors (ARFs), which are small GTP-binding proteins; the complex also influences the Golgi structural integrity, as well as the processing, activity, and endocytic recycling of LDL receptors. This is Coatomer subunit gamma-2 (COPG2) from Homo sapiens (Human).